Consider the following 430-residue polypeptide: Rosmarinate synthase (430 aa).

Histidine 152 functions as the Proton acceptor in the catalytic mechanism. Residues 178 to 210 (TPLPHFDRSSLSARNPPQPQFSHAEYQPPPTLE) form a disordered region. Aspartate 377 (proton acceptor) is an active-site residue.

Belongs to the plant acyltransferase family.

The enzyme catalyses (2R)-3-(3,4-dihydroxyphenyl)lactate + (E)-caffeoyl-CoA = (R)-rosmarinate + CoA. In terms of biological role, involved in the biosynthesis of rosmarinic acid, a compound with antiviral, antimicrobial and anti-inflammatory activities. Can use 4-coumaroyl- and caffeoyl-CoA as hydroxycinnamoyl donors and 4-Hydroxyphenyllactate and 3.4-Dihydroxyphenyllactate, but not shikimate or quinate, as hydroxycinnamoyl acceptors. Can also putatively catalyze amide formation with D-amino acids as acceptors. This is Rosmarinate synthase (RAS) from Plectranthus scutellarioides (Coleus).